Consider the following 75-residue polypeptide: UPF0181 protein ETA_15280 (75 aa).

The protein belongs to the UPF0181 family.

The polypeptide is UPF0181 protein ETA_15280 (Erwinia tasmaniensis (strain DSM 17950 / CFBP 7177 / CIP 109463 / NCPPB 4357 / Et1/99)).